The chain runs to 433 residues: Enolase 2 (433 aa).

The interval arginine 34 to lysine 56 is disordered. The span at glycine 44–lysine 56 shows a compositional bias: basic and acidic residues. Glutamine 163 contacts (2R)-2-phosphoglycerate. Glutamate 205 (proton donor) is an active-site residue. Mg(2+)-binding residues include aspartate 243, glutamate 290, and aspartate 317. (2R)-2-phosphoglycerate contacts are provided by lysine 342, arginine 371, serine 372, and lysine 393. Catalysis depends on lysine 342, which acts as the Proton acceptor.

It belongs to the enolase family. Mg(2+) serves as cofactor.

The protein localises to the cytoplasm. It is found in the secreted. The protein resides in the cell surface. The catalysed reaction is (2R)-2-phosphoglycerate = phosphoenolpyruvate + H2O. It participates in carbohydrate degradation; glycolysis; pyruvate from D-glyceraldehyde 3-phosphate: step 4/5. Catalyzes the reversible conversion of 2-phosphoglycerate (2-PG) into phosphoenolpyruvate (PEP). It is essential for the degradation of carbohydrates via glycolysis. This is Enolase 2 from Lactococcus lactis subsp. cremoris (strain SK11).